The following is a 286-amino-acid chain: ATP synthase gamma chain (286 aa).

It belongs to the ATPase gamma chain family. F-type ATPases have 2 components, CF(1) - the catalytic core - and CF(0) - the membrane proton channel. CF(1) has five subunits: alpha(3), beta(3), gamma(1), delta(1), epsilon(1). CF(0) has three main subunits: a, b and c.

It localises to the cell inner membrane. In terms of biological role, produces ATP from ADP in the presence of a proton gradient across the membrane. The gamma chain is believed to be important in regulating ATPase activity and the flow of protons through the CF(0) complex. The chain is ATP synthase gamma chain from Pseudomonas aeruginosa (strain UCBPP-PA14).